Here is a 164-residue protein sequence, read N- to C-terminus: Large ribosomal subunit protein bL9 (164 aa).

The protein belongs to the bacterial ribosomal protein bL9 family.

Its function is as follows. Binds to the 23S rRNA. The polypeptide is Large ribosomal subunit protein bL9 (Psychrobacter sp. (strain PRwf-1)).